Consider the following 116-residue polypeptide: Large ribosomal subunit protein bL19 (116 aa).

It belongs to the bacterial ribosomal protein bL19 family.

In terms of biological role, this protein is located at the 30S-50S ribosomal subunit interface and may play a role in the structure and function of the aminoacyl-tRNA binding site. The chain is Large ribosomal subunit protein bL19 from Actinobacillus pleuropneumoniae serotype 5b (strain L20).